The primary structure comprises 390 residues: tRNA(Met) cytidine acetate ligase (390 aa).

Residues 7 to 20, Gly101, Asn162, and Arg187 contribute to the ATP site; that span reads VVEYNPFHNGHKLH.

The protein belongs to the TmcAL family.

It is found in the cytoplasm. The enzyme catalyses cytidine(34) in elongator tRNA(Met) + acetate + ATP = N(4)-acetylcytidine(34) in elongator tRNA(Met) + AMP + diphosphate. Its function is as follows. Catalyzes the formation of N(4)-acetylcytidine (ac(4)C) at the wobble position of elongator tRNA(Met), using acetate and ATP as substrates. First activates an acetate ion to form acetyladenylate (Ac-AMP) and then transfers the acetyl group to tRNA to form ac(4)C34. The chain is tRNA(Met) cytidine acetate ligase from Listeria monocytogenes serovar 1/2a (strain ATCC BAA-679 / EGD-e).